The chain runs to 1234 residues: 1-phosphatidylinositol 4,5-bisphosphate phosphodiesterase beta-3 (1234 aa).

Residue Ala-2 is modified to N-acetylalanine. The 151-residue stretch at 318–468 (DMTQPLSAYF…LMGRILVKNK (151 aa)) folds into the PI-PLC X-box domain. Catalysis depends on residues His-332 and His-379. The tract at residues 467-587 (NKKRHRPSAG…GTASSEVNAT (121 aa)) is disordered. Ser-474, Ser-490, Ser-495, and Ser-537 each carry phosphoserine. Over residues 488-515 (EQSNSALSESSAATEPSSPQLGSPSSDS) the composition is skewed to low complexity. Residues 555 to 567 (REDEEEDEEEEEQ) show a composition bias toward acidic residues. Residues 576–587 (DEGTASSEVNAT) show a composition bias toward polar residues. A PI-PLC Y-box domain is found at 590–706 (MSTLVNYIEP…GYLLKPEFMR (117 aa)). Positions 707–835 (RPDKSFDPFT…RNEANQPLCL (129 aa)) constitute a C2 domain. Over residues 887–908 (AGQETCQDTQSQQLGSQPSSNP) the composition is skewed to polar residues. Positions 887 to 937 (AGQETCQDTQSQQLGSQPSSNPTPSPLDASPRRPPGPTTSPASTSLSSPGQ) are disordered. Residues 925-936 (TSPASTSLSSPG) show a composition bias toward low complexity. Phosphoserine occurs at positions 926 and 1105. The segment at 1198–1234 (GLGDGPLVACASNGHAPGSSGHLSGADSESQEENTQL) is disordered. Positions 1231-1234 (NTQL) are interaction with SHANK2.

As to quaternary structure, interacts with SHANK2. Interacts with LPAR2. The cofactor is Ca(2+).

It is found in the cytoplasm. It localises to the membrane. The protein resides in the nucleus. The enzyme catalyses a 1,2-diacyl-sn-glycero-3-phospho-(1D-myo-inositol-4,5-bisphosphate) + H2O = 1D-myo-inositol 1,4,5-trisphosphate + a 1,2-diacyl-sn-glycerol + H(+). The catalysed reaction is a 1,2-diacyl-sn-glycero-3-phospho-(1D-myo-inositol) + H2O = 1D-myo-inositol 1-phosphate + a 1,2-diacyl-sn-glycerol + H(+). Activated by G(q)/G(11) G alpha proteins in response to ligand-binding to G protein-coupled receptors. Functionally, catalyzes the production of the second messenger molecules diacylglycerol (DAG) and inositol 1,4,5-trisphosphate (IP3). Key transducer of G protein-coupled receptor signaling: activated by G(q)/G(11) G alpha proteins downstream of G protein-coupled receptors activation. In neutrophils, participates in a phospholipase C-activating N-formyl peptide-activated GPCR (G protein-coupled receptor) signaling pathway by promoting RASGRP4 activation by DAG, to promote neutrophil functional responses. The sequence is that of 1-phosphatidylinositol 4,5-bisphosphate phosphodiesterase beta-3 from Homo sapiens (Human).